Here is a 306-residue protein sequence, read N- to C-terminus: Homoserine O-acetyltransferase (306 aa).

Cys-142 (acyl-thioester intermediate) is an active-site residue. The substrate site is built by Lys-163 and Ser-192. The active-site Proton acceptor is the His-235. Glu-237 is a catalytic residue. Residue Arg-249 participates in substrate binding.

This sequence belongs to the MetA family.

The protein resides in the cytoplasm. It carries out the reaction L-homoserine + acetyl-CoA = O-acetyl-L-homoserine + CoA. Its pathway is amino-acid biosynthesis; L-methionine biosynthesis via de novo pathway; O-acetyl-L-homoserine from L-homoserine: step 1/1. In terms of biological role, transfers an acetyl group from acetyl-CoA to L-homoserine, forming acetyl-L-homoserine. This is Homoserine O-acetyltransferase from Clostridium botulinum (strain Eklund 17B / Type B).